The sequence spans 355 residues: MALSGILSKRVIAHRADENELEDDFSSSEELNTLGSEDDEDEDEDEDEGEGEGDESENEEAPDNASSEDDGDNDIKSSLSQISFGALAKAQQSLGPLKKGAKRKHGSEEEEEEDNKNTKYKKSKSDALNELRERIRRAKEEKASKSEGSRDNELLDKKHKEARSSKHAPAVQSSKYAVSRRRVVVDGENVAQVKSRDPRFDSAVQSYSHNAKSSSYATSHSDLAAAKNYAFLNEYRDAELKELEEKLRRSKKDDEKARLKKMITSMKDRKRAMENRERERQVLAKHRKKERELIKEGKKEKAWFLKKADLKKEALKEKYESMGAKERQKGIERRRKKVASKEKKEMPRSRRMVEG.

4 disordered regions span residues 1-178, 193-217, 263-284, and 319-355; these read MALS…KYAV, VKSRDPRFDSAVQSYSHNAKSSSYA, ITSMKDRKRAMENRERERQVLA, and YESMGAKERQKGIERRRKKVASKEKKEMPRSRRMVEG. Residues 36 to 72 are compositionally biased toward acidic residues; sequence SEDDEDEDEDEDEGEGEGDESENEEAPDNASSEDDGD. The stretch at 111-150 forms a coiled coil; it reads EEEDNKNTKYKKSKSDALNELRERIRRAKEEKASKSEGSR. The span at 123–164 shows a compositional bias: basic and acidic residues; that stretch reads SKSDALNELRERIRRAKEEKASKSEGSRDNELLDKKHKEARS. The span at 203 to 217 shows a compositional bias: polar residues; it reads AVQSYSHNAKSSSYA. Positions 233–325 form a coiled coil; that stretch reads NEYRDAELKE…KEKYESMGAK (93 aa). Basic and acidic residues-rich tracts occupy residues 271–282, 319–331, and 339–355; these read RAMENRERERQV, YESMGAKERQKGI, and ASKEKKEMPRSRRMVEG.

Belongs to the RRP36 family. Associates with 90S and pre-40S pre-ribosomal particles.

It is found in the nucleus. The protein resides in the nucleolus. Its function is as follows. Component of the 90S pre-ribosome involved in the maturation of rRNAs. Required for early cleavages of the pre-RNAs in the 40S ribosomal subunit maturation pathway. The protein is rRNA biogenesis protein RRP36 (RRP36) of Trichophyton verrucosum (strain HKI 0517).